Reading from the N-terminus, the 297-residue chain is Tumor necrosis factor receptor superfamily member 27 (297 aa).

Topologically, residues 1 to 138 are extracellular; sequence MDCQENEYWD…TPTVPPQEAT (138 aa). TNFR-Cys repeat units follow at residues 2 to 41, 43 to 83, and 85 to 118; these read DCQE…DAYC, ACPP…NAVC, and DCLP…EVQC. 8 cysteine pairs are disulfide-bonded: C3–C15, C18–C31, C21–C41, C44–C58, C61–C75, C64–C83, C86–C104, and C107–C118. N74 carries N-linked (GlcNAc...) asparagine glycosylation. A helical; Signal-anchor for type III membrane protein membrane pass occupies residues 139–159; the sequence is LVALVSSLLVVFTLAFLGLFF. Residues 160-297 are Cytoplasmic-facing; sequence LYCKQFFNRH…LNVPFEVPSP (138 aa). Over residues 272-281 the composition is skewed to polar residues; that stretch reads ETLGGNTVES. The tract at residues 272–297 is disordered; that stretch reads ETLGGNTVESTGDRLELNVPFEVPSP.

As to quaternary structure, associates with TRAF1, TRAF3 and TRAF6.

The protein resides in the membrane. Functionally, receptor for EDA isoform A2, but not for EDA isoform A1. Mediates the activation of the NF-kappa-B and JNK pathways. Activation seems to be mediated by binding to TRAF3 and TRAF6. The protein is Tumor necrosis factor receptor superfamily member 27 (EDA2R) of Homo sapiens (Human).